A 274-amino-acid polypeptide reads, in one-letter code: tRNA-cytidine(32) 2-sulfurtransferase (274 aa).

Positions 40 to 45 (SGGKDS) match the PP-loop motif motif. Positions 115, 118, and 206 each coordinate [4Fe-4S] cluster.

This sequence belongs to the TtcA family. Homodimer. Requires Mg(2+) as cofactor. [4Fe-4S] cluster is required as a cofactor.

Its subcellular location is the cytoplasm. It catalyses the reaction cytidine(32) in tRNA + S-sulfanyl-L-cysteinyl-[cysteine desulfurase] + AH2 + ATP = 2-thiocytidine(32) in tRNA + L-cysteinyl-[cysteine desulfurase] + A + AMP + diphosphate + H(+). It functions in the pathway tRNA modification. Catalyzes the ATP-dependent 2-thiolation of cytidine in position 32 of tRNA, to form 2-thiocytidine (s(2)C32). The sulfur atoms are provided by the cysteine/cysteine desulfurase (IscS) system. The chain is tRNA-cytidine(32) 2-sulfurtransferase from Pseudomonas putida (strain W619).